The following is a 347-amino-acid chain: L-Ala-D/L-amino acid epimerase (347 aa).

Position 156-158 (Lys156–Lys158) interacts with substrate. Residues Asp183, Glu211, and Asp237 each contribute to the Mg(2+) site. Residues Lys259 and Asp309 to Asp311 each bind substrate.

The protein belongs to the mandelate racemase/muconate lactonizing enzyme family. The cofactor is Mg(2+).

Its function is as follows. Dipeptide epimerase with a broad substrate specificity. Catalyzes the epimerization of L-Ala-L-Ala, L-Ala-L-Ser, L-Ala-L-Thr, L-Ala-L-Met, L-Ala-L-Phe, L-Ala-L-Tyr, L-Gly-L-Asp, L-Val-L-Asp, L-Val-L-Glu and L-Val-L-Phe (in vitro). Can also catalyze the epimerization of L-Ala-L-Glu, but with lower efficiency. The sequence is that of L-Ala-D/L-amino acid epimerase from Pedosphaera parvula (strain Ellin514).